Reading from the N-terminus, the 149-residue chain is Protein SprT-like (149 aa).

Positions 4–144 (TDYVKQVSLE…GLCRGKLLLV (141 aa)) constitute a SprT-like domain. A Zn(2+)-binding site is contributed by His64. Glu65 is a catalytic residue. His68 is a binding site for Zn(2+).

This sequence belongs to the SprT family. Requires Zn(2+) as cofactor.

The protein resides in the cytoplasm. The polypeptide is Protein SprT-like (Streptococcus pneumoniae serotype 4 (strain ATCC BAA-334 / TIGR4)).